Consider the following 118-residue polypeptide: Thioredoxin H-type (118 aa).

The 113-residue stretch at 2-114 (AAEEGQVIGC…LQQTIAKHMA (113 aa)) folds into the Thioredoxin domain. Residues C40 and C43 each act as nucleophile in the active site. A disulfide bridge connects residues C40 and C43.

Belongs to the thioredoxin family. Plant H-type subfamily.

The protein resides in the cytoplasm. In terms of biological role, participates in various redox reactions through the reversible oxidation of the active center dithiol to a disulfide. The H form is known to activate a number of cytosolic enzymes. This is Thioredoxin H-type from Ricinus communis (Castor bean).